The chain runs to 295 residues: Large ribosomal subunit protein uL29m (295 aa).

Belongs to the universal ribosomal protein uL29 family. Component of the mitochondrial large ribosomal subunit. Mature mitochondrial ribosomes consist of a small (37S) and a large (54S) subunit. The 37S subunit contains at least 33 different proteins and 1 molecule of RNA (15S). The 54S subunit contains at least 45 different proteins and 1 molecule of RNA (21S).

The protein localises to the mitochondrion. The sequence is that of Large ribosomal subunit protein uL29m (MRPL4) from Meyerozyma guilliermondii (strain ATCC 6260 / CBS 566 / DSM 6381 / JCM 1539 / NBRC 10279 / NRRL Y-324) (Yeast).